A 499-amino-acid chain; its full sequence is Glycerol kinase (499 aa).

Thr17 contacts ADP. Residues Thr17, Thr18, and Ser19 each contribute to the ATP site. A sn-glycerol 3-phosphate-binding site is contributed by Thr17. Arg21 contacts ADP. The sn-glycerol 3-phosphate site is built by Arg87, Glu88, Tyr139, and Asp243. Positions 87, 88, 139, 243, and 244 each coordinate glycerol. Thr265 and Gly308 together coordinate ADP. ATP is bound by residues Thr265, Gly308, Gln312, and Gly409. Residues Gly409 and Asn413 each contribute to the ADP site.

This sequence belongs to the FGGY kinase family.

It carries out the reaction glycerol + ATP = sn-glycerol 3-phosphate + ADP + H(+). It functions in the pathway polyol metabolism; glycerol degradation via glycerol kinase pathway; sn-glycerol 3-phosphate from glycerol: step 1/1. Inhibited by fructose 1,6-bisphosphate (FBP). In terms of biological role, key enzyme in the regulation of glycerol uptake and metabolism. Catalyzes the phosphorylation of glycerol to yield sn-glycerol 3-phosphate. The chain is Glycerol kinase from Pseudomonas entomophila (strain L48).